We begin with the raw amino-acid sequence, 596 residues long: Elongation factor 4 (596 aa).

The tr-type G domain maps to 2 to 183 (KNIRNFSIIA…AIVRRVPAPD (182 aa)). Residues 14 to 19 (DHGKST) and 130 to 133 (NKID) contribute to the GTP site.

This sequence belongs to the TRAFAC class translation factor GTPase superfamily. Classic translation factor GTPase family. LepA subfamily.

It is found in the cell inner membrane. It carries out the reaction GTP + H2O = GDP + phosphate + H(+). Its function is as follows. Required for accurate and efficient protein synthesis under certain stress conditions. May act as a fidelity factor of the translation reaction, by catalyzing a one-codon backward translocation of tRNAs on improperly translocated ribosomes. Back-translocation proceeds from a post-translocation (POST) complex to a pre-translocation (PRE) complex, thus giving elongation factor G a second chance to translocate the tRNAs correctly. Binds to ribosomes in a GTP-dependent manner. The sequence is that of Elongation factor 4 from Campylobacter curvus (strain 525.92).